The sequence spans 602 residues: Elongation factor 4 (602 aa).

A tr-type G domain is found at 6–188; it reads DHIRNFSIVA…AIVNKLPAPK (183 aa). GTP-binding positions include 18 to 23 and 135 to 138; these read DHGKST and NKID.

The protein belongs to the TRAFAC class translation factor GTPase superfamily. Classic translation factor GTPase family. LepA subfamily.

It localises to the cell inner membrane. It catalyses the reaction GTP + H2O = GDP + phosphate + H(+). In terms of biological role, required for accurate and efficient protein synthesis under certain stress conditions. May act as a fidelity factor of the translation reaction, by catalyzing a one-codon backward translocation of tRNAs on improperly translocated ribosomes. Back-translocation proceeds from a post-translocation (POST) complex to a pre-translocation (PRE) complex, thus giving elongation factor G a second chance to translocate the tRNAs correctly. Binds to ribosomes in a GTP-dependent manner. The polypeptide is Elongation factor 4 (Brucella suis (strain ATCC 23445 / NCTC 10510)).